The chain runs to 661 residues: Glycogen debranching enzyme (661 aa).

D338 functions as the Nucleophile in the catalytic mechanism. The Proton donor role is filled by E373. Residues 460–481 (NQLNGEGNRDGSDRNFSNNHGV) are disordered.

Belongs to the glycosyl hydrolase 13 family.

The catalysed reaction is Hydrolysis of (1-&gt;6)-alpha-D-glucosidic linkages to branches with degrees of polymerization of three or four glucose residues in limit dextrin.. The protein operates within glycan degradation; glycogen degradation. Its function is as follows. Removes maltotriose and maltotetraose chains that are attached by 1,6-alpha-linkage to the limit dextrin main chain, generating a debranched limit dextrin. The polypeptide is Glycogen debranching enzyme (Serratia proteamaculans (strain 568)).